We begin with the raw amino-acid sequence, 165 residues long: RNA pyrophosphohydrolase (165 aa).

The Nudix hydrolase domain maps to 13 to 154; that stretch reads PYRQGVGIML…KRPVYEQVVA (142 aa). The Nudix box signature appears at 46-67; sequence GGIDAGEDPETAAWREMEEEIG.

It belongs to the Nudix hydrolase family. RppH subfamily. The cofactor is a divalent metal cation.

Accelerates the degradation of transcripts by removing pyrophosphate from the 5'-end of triphosphorylated RNA, leading to a more labile monophosphorylated state that can stimulate subsequent ribonuclease cleavage. In Rhodospirillum rubrum (strain ATCC 11170 / ATH 1.1.1 / DSM 467 / LMG 4362 / NCIMB 8255 / S1), this protein is RNA pyrophosphohydrolase.